The chain runs to 423 residues: ER-bound oxygenase mpaB' (423 aa).

Over 1-22 (MSLSLPPALSELARALPYSRTQ) the chain is Lumenal. A helical transmembrane segment spans residues 23–41 (WLPILVGFLIGYPLLIKAL). Over 42 to 423 (RYKRLGEMKK…ISRTGKCPFH (382 aa)) the chain is Cytoplasmic.

The protein belongs to the mpaB oxygenase family.

It is found in the endoplasmic reticulum membrane. The catalysed reaction is 4-farnesyl-3,5-dihydroxy-6-methylphthalide + AH2 + 2 O2 = (4E,8E)-10-(4,6-dihydroxy-7-methyl-3-oxo-1,3-dihydro-2-benzofuran-5-yl)-4,8-dimethyldeca-4,8-dienoate + acetone + A + H2O + H(+). It participates in secondary metabolite biosynthesis; terpenoid biosynthesis. In terms of biological role, ER-bound oxygenase; part of the gene cluster that mediates the biosynthesis of mycophenolic acid (MPA), the first isolated antibiotic natural product in the world obtained from a culture of Penicillium brevicompactum in 1893. MpaB' catalyzes the oxidative cleavage the C19-C20 double bond in farnesyl-DHMP (FDHMP) to yield FDHMP-3C via a mycophenolic aldehyde intermediate. The first step of the pathway is the synthesis of 5-methylorsellinic acid (5MOA) by the cytosolic polyketide synthase mpaC. 5MOA is then converted to the phthalide compound 5,7-dihydroxy-4,6-dimethylphthalide (DHMP) by the endoplasmic reticulum-bound cytochrome P450 monooxygenase mpaDE. MpaDE first catalyzes hydroxylation of 5-MOA to 4,6-dihydroxy-2-(hydroxymethyl)-3-methylbenzoic acid (DHMB). MpaDE then acts as a lactone synthase that catalyzes the ring closure to convert DHMB into DHMP. The next step is the prenylation of DHMP by the Golgi apparatus-associated prenyltransferase mpaA to yield farnesyl-DHMP (FDHMP). The ER-bound oxygenase mpaB then mediates the oxidative cleavage the C19-C20 double bond in FDHMP to yield FDHMP-3C via a mycophenolic aldehyde intermediate. The O-methyltransferase mpaG catalyzes the methylation of FDHMP-3C to yield MFDHMP-3C. After the cytosolic methylation of FDHMP-3C, MFDHMP-3C enters into peroxisomes probably via free diffusion due to its low molecular weight. Upon a peroxisomal CoA ligation reaction, catalyzed by a beta-oxidation component enzyme acyl-CoA ligase ACL891, MFDHMP-3C-CoA would then be restricted to peroxisomes for the following beta-oxidation pathway steps. The peroxisomal beta-oxidation machinery than converts MFDHMP-3C-CoA into MPA_CoA, via a beta-oxidation chain-shortening process. Finally mpaH acts as a peroxisomal acyl-CoA hydrolase with high substrate specificity toward MPA-CoA to release the final product MPA. This chain is ER-bound oxygenase mpaB', found in Penicillium brevicompactum.